We begin with the raw amino-acid sequence, 838 residues long: Ribonucleoside-diphosphate reductase large subunit (838 aa).

Residues 6 to 97 (KLVTKRDGSV…VTALHKTTTE (92 aa)) enclose the ATP-cone domain. Residues 10-11 (KR), 16-22 (EPYDEKV), threonine 58, and aspartate 62 contribute to the ATP site. Residue serine 227 coordinates GDP. Cysteine 228 and cysteine 454 are joined by a disulfide. DTTP contacts are provided by residues 236–238 (DSI), lysine 253, arginine 266, and 273–274 (AG). Residue asparagine 437 participates in GDP binding. Residue asparagine 437 is the Proton acceptor of the active site. The active-site Cysteine radical intermediate is the cysteine 439. GDP is bound by residues glutamate 441 and 626-629 (TAST). The active-site Proton acceptor is glutamate 441. Residues 780–794 (KELPKPDKQSKEEVH) show a composition bias toward basic and acidic residues. Positions 780-838 (KELPKPDKQSKEEVHGSVGRGKRKRVGEKPTANHSNAGAPNLNGPPDTDGDGGCLNCGS) are disordered.

It belongs to the ribonucleoside diphosphate reductase large chain family. In terms of assembly, heterodimer of a large and a small subunit.

It catalyses the reaction a 2'-deoxyribonucleoside 5'-diphosphate + [thioredoxin]-disulfide + H2O = a ribonucleoside 5'-diphosphate + [thioredoxin]-dithiol. The catalysed reaction is dCDP + [thioredoxin]-disulfide + H2O = CDP + [thioredoxin]-dithiol. Its activity is regulated as follows. Under complex allosteric control mediated by deoxynucleoside triphosphates and ATP binding to separate specificity and activation sites on the large subunit. The type of nucleotide bound at the specificity site determines substrate preference. It seems probable that ATP makes the enzyme reduce CDP and UDP, dGTP favors ADP reduction and dTTP favors GDP reduction. Stimulated by ATP and inhibited by dATP binding to the activity site. In terms of biological role, provides the precursors necessary for DNA synthesis. Catalyzes the rate limiting step in the de novo synthesis of deoxyribonucleotides by directly reducing ribonucleotides to the corresponding deoxyribonucleotides. This is Ribonucleoside-diphosphate reductase large subunit (RNR1) from Trypanosoma brucei brucei.